A 118-amino-acid polypeptide reads, in one-letter code: uncharacterized protein (118 aa).

Transmembrane regions (helical) follow at residues 5 to 20, 25 to 42, 53 to 73, and 83 to 103; these read IVFY…SVVM, VIRT…LLYF, ALAI…FIIL, and LFFT…SLSI.

It is found in the cell membrane. This is an uncharacterized protein from Bacillus subtilis (strain 168).